Reading from the N-terminus, the 30-residue chain is Trypsin inhibitor 2 (30 aa).

3 disulfide bridges follow: C2-C19, C9-C21, and C15-C27.

It belongs to the protease inhibitor I7 (squash-type serine protease inhibitor) family.

The protein localises to the secreted. In terms of biological role, inhibits trypsin. This Ecballium elaterium (Squirting cucumber) protein is Trypsin inhibitor 2.